The primary structure comprises 657 residues: Methionine--tRNA ligase (657 aa).

The 'HIGH' region motif lies at 13 to 23 (YYPSGNLHIGH). The short motif at 308–312 (KMSKS) is the 'KMSKS' region element. An ATP-binding site is contributed by lysine 311. The tRNA-binding domain occupies 557-657 (DFDKVEIKAA…SAIPNGAVIK (101 aa)).

It belongs to the class-I aminoacyl-tRNA synthetase family. MetG type 2B subfamily. As to quaternary structure, homodimer.

It localises to the cytoplasm. The enzyme catalyses tRNA(Met) + L-methionine + ATP = L-methionyl-tRNA(Met) + AMP + diphosphate. Is required not only for elongation of protein synthesis but also for the initiation of all mRNA translation through initiator tRNA(fMet) aminoacylation. The protein is Methionine--tRNA ligase of Staphylococcus aureus (strain MW2).